The following is a 172-amino-acid chain: Large ribosomal subunit protein uL10 (172 aa).

This sequence belongs to the universal ribosomal protein uL10 family. As to quaternary structure, part of the ribosomal stalk of the 50S ribosomal subunit. The N-terminus interacts with L11 and the large rRNA to form the base of the stalk. The C-terminus forms an elongated spine to which L12 dimers bind in a sequential fashion forming a multimeric L10(L12)X complex.

Functionally, forms part of the ribosomal stalk, playing a central role in the interaction of the ribosome with GTP-bound translation factors. The polypeptide is Large ribosomal subunit protein uL10 (Chlorobium luteolum (strain DSM 273 / BCRC 81028 / 2530) (Pelodictyon luteolum)).